The primary structure comprises 635 residues: Protein NSP-INTERACTING KINASE 2 (635 aa).

Residues 1–32 form the signal peptide; the sequence is MLQGRREAKKSYALFSSTFFFFFICFLSSSSA. Topologically, residues 33 to 248 are extracellular; it reads ELTDKGVNFE…DGGTKNRKIA (216 aa). Residues asparagine 92 and asparagine 103 are each glycosylated (N-linked (GlcNAc...) asparagine). LRR repeat units lie at residues 104–128, 129–153, 155–176, and 177–200; these read LTNL…IGKL, MKLK…SYSK, LQYL…LANM, and TQLT…LAKT. Asparagine 140, asparagine 162, asparagine 175, asparagine 188, asparagine 219, asparagine 231, and asparagine 235 each carry an N-linked (GlcNAc...) asparagine glycan. Residues 214–242 are disordered; sequence TEKDCNGTQPKPMSITLNSSQNKSSDGGT. Residues 219–241 show a composition bias toward polar residues; the sequence is NGTQPKPMSITLNSSQNKSSDGG. The helical transmembrane segment at 249–269 threads the bilayer; it reads VVFGVSLTCVCLLIIGFGFLL. Residues 270-635 lie on the Cytoplasmic side of the membrane; that stretch reads WWRRRHNKQV…VQAMELSGPR (366 aa). Threonine 309 carries the post-translational modification Phosphothreonine. Residues 312-591 enclose the Protein kinase domain; sequence FSSKNLVGKG…EGDGLVEKWE (280 aa). Residues 318–326 and lysine 340 contribute to the ATP site; that span reads VGKGGFGNV. Serine 393 and serine 396 each carry phosphoserine. At threonine 408 the chain carries Phosphothreonine. Residues 422-502 form an interaction with geminivirus NSP protein region; the sequence is YLHEQCDPKI…DVFGFGILLL (81 aa). Residue aspartate 435 is the Proton acceptor of the active site. 3 positions are modified to phosphothreonine: threonine 468, threonine 469, and threonine 474. Tyrosine 482 is subject to Phosphotyrosine. Phosphoserine is present on serine 484. Residue threonine 485 is modified to Phosphothreonine. Serine 489 is subject to Phosphoserine. Threonine 564 is subject to Phosphothreonine. Positions 593–613 are enriched in polar residues; sequence SSQRAETNRSYSKPNEFSSSE. The disordered stretch occupies residues 593 to 621; sequence SSQRAETNRSYSKPNEFSSSERYSDLTDD.

Belongs to the protein kinase superfamily. Ser/Thr protein kinase family. Oligomer. Interacts with geminivirus nuclear shuttle protein (NSP). Post-translationally, autophosphorylated. In terms of tissue distribution, expressed in flowers and roots.

The protein resides in the cell membrane. It carries out the reaction L-seryl-[protein] + ATP = O-phospho-L-seryl-[protein] + ADP + H(+). It catalyses the reaction L-threonyl-[protein] + ATP = O-phospho-L-threonyl-[protein] + ADP + H(+). With respect to regulation, inhibited by the viral nuclear shuttle protein (NSP) that binds to the region required for oligomerization. Functionally, involved in defense response to geminivirus infection. Phosphorylates RPL10A in vitro. The protein is Protein NSP-INTERACTING KINASE 2 (NIK2) of Arabidopsis thaliana (Mouse-ear cress).